A 580-amino-acid polypeptide reads, in one-letter code: CTP synthase (580 aa).

In terms of domain architecture, Glutamine amidotransferase type-1 spans 304-559 (NIILVGKYVS…VAASSGCLDE (256 aa)). Residues C403, H532, and E534 each act as for GATase activity in the active site.

It belongs to the CTP synthase family.

The enzyme catalyses UTP + L-glutamine + ATP + H2O = CTP + L-glutamate + ADP + phosphate + 2 H(+). The protein operates within pyrimidine metabolism; CTP biosynthesis via de novo pathway; CTP from UDP: step 2/2. In terms of biological role, catalyzes the ATP-dependent amination of UTP to CTP with either L-glutamine or ammonia as the source of nitrogen. This is CTP synthase (URA7) from Gibberella zeae (strain ATCC MYA-4620 / CBS 123657 / FGSC 9075 / NRRL 31084 / PH-1) (Wheat head blight fungus).